The chain runs to 473 residues: Asparagine--tRNA ligase (473 aa).

It belongs to the class-II aminoacyl-tRNA synthetase family. Homodimer.

It localises to the cytoplasm. It carries out the reaction tRNA(Asn) + L-asparagine + ATP = L-asparaginyl-tRNA(Asn) + AMP + diphosphate + H(+). In Treponema denticola (strain ATCC 35405 / DSM 14222 / CIP 103919 / JCM 8153 / KCTC 15104), this protein is Asparagine--tRNA ligase.